The primary structure comprises 393 residues: 1-deoxy-D-xylulose 5-phosphate reductoisomerase (393 aa).

The NADPH site is built by Thr-10, Gly-11, Ser-12, Ile-13, Gln-38, and Asn-124. A 1-deoxy-D-xylulose 5-phosphate-binding site is contributed by Lys-125. Residue Glu-126 participates in NADPH binding. A Mn(2+)-binding site is contributed by Asp-150. 1-deoxy-D-xylulose 5-phosphate contacts are provided by Ser-151, Glu-152, Ser-179, and His-202. Residue Glu-152 participates in Mn(2+) binding. An NADPH-binding site is contributed by Gly-208. 1-deoxy-D-xylulose 5-phosphate is bound by residues Ser-215, Asn-220, Lys-221, and Glu-224. Glu-224 contributes to the Mn(2+) binding site.

Belongs to the DXR family. It depends on Mg(2+) as a cofactor. Requires Mn(2+) as cofactor.

It carries out the reaction 2-C-methyl-D-erythritol 4-phosphate + NADP(+) = 1-deoxy-D-xylulose 5-phosphate + NADPH + H(+). It participates in isoprenoid biosynthesis; isopentenyl diphosphate biosynthesis via DXP pathway; isopentenyl diphosphate from 1-deoxy-D-xylulose 5-phosphate: step 1/6. Its function is as follows. Catalyzes the NADPH-dependent rearrangement and reduction of 1-deoxy-D-xylulose-5-phosphate (DXP) to 2-C-methyl-D-erythritol 4-phosphate (MEP). This is 1-deoxy-D-xylulose 5-phosphate reductoisomerase from Ralstonia nicotianae (strain ATCC BAA-1114 / GMI1000) (Ralstonia solanacearum).